Consider the following 262-residue polypeptide: UPF0739 protein C1orf74 homolog (262 aa).

It belongs to the UPF0739 family.

This Xenopus laevis (African clawed frog) protein is UPF0739 protein C1orf74 homolog.